The primary structure comprises 1905 residues: Low-density lipoprotein receptor-related protein 4 (1905 aa).

A signal peptide spans 1–20 (MRRWWGALLLGALLCAHGTA). At 21 to 1723 (SNLECACGRS…VPAAPGEGLH (1703 aa)) the chain is on the extracellular side. LDL-receptor class A domains are found at residues 26–67 (ACGR…DGCT), 70–106 (TCSP…QDCP), 109–144 (ECEE…EQCD), 147–183 (KCSD…ESCP), 190–226 (PCNL…SDCS), 230–266 (PCRS…RNCT), 269–305 (MCTA…ENCE), and 311–350 (QCAS…QNCR). Cystine bridges form between Cys27–Cys44, Cys34–Cys57, Cys51–Cys66, Cys71–Cys83, Cys78–Cys96, Cys90–Cys105, Cys110–Cys122, Cys117–Cys135, Cys129–Cys143, Cys148–Cys160, Cys155–Cys173, Cys167–Cys182, Cys191–Cys203, Cys198–Cys216, Cys210–Cys225, Cys231–Cys243, Cys238–Cys256, Cys250–Cys265, Cys270–Cys282, Cys277–Cys295, Cys289–Cys304, Cys312–Cys324, Cys319–Cys337, Cys331–Cys349, Cys358–Cys369, Cys365–Cys378, Cys380–Cys393, Cys399–Cys409, Cys405–Cys418, and Cys420–Cys433. Residue Asn264 is glycosylated (N-linked (GlcNAc...) asparagine). The 41-residue stretch at 354-394 (GEENCNVNNGGCAQKCQMIRGAVQCTCHTGYRLTEDGRTCQ) folds into the EGF-like 1; atypical domain. Residues 395–434 (DVNECAEEGYCSQGCTNSEGAFQCWCEAGYELRPDRRSCK) enclose the EGF-like 2; calcium-binding domain. LDL-receptor class B repeat units follow at residues 480-522 (ELVF…DWVH), 523-565 (DKLY…HPME), 566-609 (GTIY…DYAG), 610-652 (RRMY…FEDS), and 653-693 (LYWT…LHPQ). Asn498 is a glycosylation site (N-linked (GlcNAc...) asparagine). Positions 698 to 737 (GKNRCGDNNGGCTHLCLPSGQNYTCACPTGFRKINSHACA) constitute an EGF-like 3 domain. 3 disulfide bridges follow: Cys702/Cys713, Cys709/Cys722, and Cys724/Cys736. N-linked (GlcNAc...) asparagine glycosylation occurs at Asn719. 5 LDL-receptor class B repeats span residues 785-827 (DHVY…DWVT), 828-870 (NKLY…EPMG), 871-914 (GYMY…DYGS), 915-956 (QRLY…LYGQ), and 957-998 (RIYW…FHRQ). Asn901 is a glycosylation site (N-linked (GlcNAc...) asparagine). The N-linked (GlcNAc...) asparagine glycan is linked to Asn1077. LDL-receptor class B repeat units follow at residues 1093-1135 (GKVY…DAIG), 1136-1178 (RKVY…YHEM), 1179-1222 (GFMY…DKTS), 1223-1263 (SQLL…LLDS), 1264-1306 (YIYW…DRAQ), 1397-1439 (GKVY…DWVA), 1440-1482 (RNLY…FPRK), 1483-1526 (GYLF…DYDT), 1527-1568 (RRIY…QDRW), and 1569-1610 (IYWT…SPQR). N-linked (GlcNAc...) asparagine glycosylation is found at Asn1415 and Asn1467. Residues 1659 to 1696 (PRATSLNEKSPVLPNTLPTTLHSSTTRTRTSPEGAEGR) are disordered. Over residues 1671-1690 (LPNTLPTTLHSSTTRTRTSP) the composition is skewed to low complexity. Residues 1724-1746 (VSYAVGGLLSVLLILLVTAALML) traverse the membrane as a helical segment. Residues 1747–1905 (YRHRKSKFTD…ERKLSSESQV (159 aa)) are Cytoplasmic-facing. Positions 1853 to 1905 (SSGSLDDTETEQLLQEEQSECSSVHTATTPERRGSLPDTGWKHERKLSSESQV) are disordered. Residues 1872 to 1881 (ECSSVHTATT) are compositionally biased toward polar residues. The span at 1882–1905 (PERRGSLPDTGWKHERKLSSESQV) shows a compositional bias: basic and acidic residues.

It belongs to the LDLR family. In terms of assembly, homooligomer. Interacts with MUSK; the heterodimer forms an AGRIN receptor complex that binds AGRIN resulting in activation of MUSK. Interacts (via the extracellular domain) with SOST; the interaction facilitates the inhibition of Wnt signaling. Interacts with MESD; the interaction promotes glycosylation of LRP4 and its cell-surface expression. In terms of processing, N-glycosylation is required for cell surface location. In terms of tissue distribution, expressed in different regions of the brain, mainly in the olfactory bulb, at lower level in the cerebral cortex and hippocampus.

It localises to the cell membrane. Mediates SOST-dependent inhibition of bone formation. Functions as a specific facilitator of SOST-mediated inhibition of Wnt signaling. Plays a key role in the formation and the maintenance of the neuromuscular junction (NMJ), the synapse between motor neuron and skeletal muscle. Directly binds AGRIN and recruits it to the MUSK signaling complex. Mediates the AGRIN-induced phosphorylation of MUSK, the kinase of the complex. The activation of MUSK in myotubes induces the formation of NMJ by regulating different processes including the transcription of specific genes and the clustering of AChR in the postsynaptic membrane. Alternatively, may be involved in the negative regulation of the canonical Wnt signaling pathway, being able to antagonize the LRP6-mediated activation of this pathway. More generally, has been proposed to function as a cell surface endocytic receptor binding and internalizing extracellular ligands for degradation by lysosomes. Plays an essential role in the process of digit differentiation. This is Low-density lipoprotein receptor-related protein 4 (Lrp4) from Rattus norvegicus (Rat).